Reading from the N-terminus, the 601-residue chain is Arginine--tRNA ligase (601 aa).

Residues proline 133 to histidine 143 carry the 'HIGH' region motif.

It belongs to the class-I aminoacyl-tRNA synthetase family. As to quaternary structure, monomer.

It is found in the cytoplasm. The catalysed reaction is tRNA(Arg) + L-arginine + ATP = L-arginyl-tRNA(Arg) + AMP + diphosphate. The protein is Arginine--tRNA ligase of Flavobacterium psychrophilum (strain ATCC 49511 / DSM 21280 / CIP 103535 / JIP02/86).